A 428-amino-acid chain; its full sequence is Adenylosuccinate synthetase (428 aa).

Residues 12-18 (GDEGKGK) and 40-42 (GHT) each bind GTP. Aspartate 13 serves as the catalytic Proton acceptor. 2 residues coordinate Mg(2+): aspartate 13 and glycine 40. IMP contacts are provided by residues 13–16 (DEGK), 38–41 (NAGH), threonine 131, arginine 145, glutamine 226, threonine 241, and arginine 305. Histidine 41 (proton donor) is an active-site residue. 301–307 (ATTGRKR) contributes to the substrate binding site. Residues arginine 307, 333–335 (KLD), and 415–417 (SVG) each bind GTP.

The protein belongs to the adenylosuccinate synthetase family. Homodimer. Requires Mg(2+) as cofactor.

It is found in the cytoplasm. The catalysed reaction is IMP + L-aspartate + GTP = N(6)-(1,2-dicarboxyethyl)-AMP + GDP + phosphate + 2 H(+). It functions in the pathway purine metabolism; AMP biosynthesis via de novo pathway; AMP from IMP: step 1/2. Plays an important role in the de novo pathway of purine nucleotide biosynthesis. Catalyzes the first committed step in the biosynthesis of AMP from IMP. This chain is Adenylosuccinate synthetase, found in Nitratidesulfovibrio vulgaris (strain DSM 19637 / Miyazaki F) (Desulfovibrio vulgaris).